The chain runs to 267 residues: Putative carboxymethylenebutenolidase (267 aa).

Catalysis depends on residues C137, D194, and H226.

The protein belongs to the dienelactone hydrolase family.

It catalyses the reaction 2-(5-oxo-2,5-dihydrofuran-2-ylidene)acetate + H2O = 4-oxohex-2-enedioate + H(+). This is Putative carboxymethylenebutenolidase from Yersinia pestis.